We begin with the raw amino-acid sequence, 579 residues long: Rho guanine nucleotide exchange factor 25 (579 aa).

Disordered stretches follow at residues 27 to 61 (AVPG…GERE) and 172 to 194 (VKAQ…EQKK). A DH domain is found at 199–375 (RSMFVLSELV…CFVPKRCNDM (177 aa)). An important for binding to Rho GTPases region spans residues 317 to 338 (LGHRLQLSDLLIKPVQRIMKYQ). The 120-residue stretch at 380–499 (RLRGFEGKLT…ESQTNSLGRS (120 aa)) folds into the PH domain. Residues 472 to 498 (SQRDFLNALQSPIEYQRRESQTNSLGR) are sufficient to bind activated GNAQ. 2 disordered regions span residues 487 to 516 (QRRE…VSMH) and 546 to 579 (LSET…EDEL).

As to quaternary structure, interacts with activated GNAQ and GNA11. Interacts with RHOA, CDC42 and RAC1. Interacts (via the DH domain) with POPDC1 (via the C-terminus cytoplasmic tail).

The protein resides in the cytoplasm. It is found in the myofibril. Its subcellular location is the sarcomere. It localises to the cell membrane. Its function is as follows. May play a role in actin cytoskeleton reorganization in different tissues since its activation induces formation of actin stress fibers. It works as a guanine nucleotide exchange factor for Rho family of small GTPases. Links specifically G alpha q/11-coupled receptors to RHOA activation. May be an important regulator of processes involved in axon and dendrite formation. In neurons seems to be an exchange factor primarily for RAC1. Involved in skeletal myogenesis. This is Rho guanine nucleotide exchange factor 25 (Arhgef25) from Rattus norvegicus (Rat).